Here is a 264-residue protein sequence, read N- to C-terminus: Neurexophilin-2 (264 aa).

Positions Met1–Ser22 are cleaved as a signal peptide. Positions Glu23 to Val90 are II. N-linked (GlcNAc...) asparagine glycans are attached at residues Asn86, Asn139, Asn149, and Asn155. Residues Gln91–Phe169 are III. Residues Glu170 to Glu178 are IV (linker domain). The v (Cys-rich) stretch occupies residues Thr179–Gly264.

It belongs to the neurexophilin family. Post-translationally, may be proteolytically processed at the boundary between the N-terminal non-conserved and the central conserved domain in neuron-like cells. As to expression, brain, only in a scattered subpopulation of neurons that probably represent inhibitory interneurons.

The protein resides in the secreted. May be signaling molecules that resemble neuropeptides and that act by binding to alpha-neurexins and possibly other receptors. This is Neurexophilin-2 (NXPH2) from Bos taurus (Bovine).